We begin with the raw amino-acid sequence, 172 residues long: Counting factor-associated protein B (172 aa).

A signal peptide spans 1-21 (MKLLNSLILLVLTCLVSSINT). 2 N-linked (GlcNAc...) asparagine glycosylation sites follow: Asn37 and Asn153.

The protein resides in the secreted. This chain is Counting factor-associated protein B (cfaB), found in Dictyostelium discoideum (Social amoeba).